Reading from the N-terminus, the 334-residue chain is HTH-type transcriptional repressor PurR (334 aa).

An HTH lacI-type domain is found at 2 to 56 (ATIKDVARMAGVSTTTVSHVINKTRFVAEATQKKVLAAVDDLNYAPSAVARSLKC). The segment at residues 4–23 (IKDVARMAGVSTTTVSHVIN) is a DNA-binding region (H-T-H motif). Residues 48–56 (SAVARSLKC) mediate DNA binding. Residues Phe-73, Lys-189, Thr-191, Phe-220, and Asp-274 each contribute to the hypoxanthine site.

In terms of assembly, homodimer.

Its pathway is purine metabolism; purine nucleotide biosynthesis [regulation]. Is the main repressor of the genes involved in the de novo synthesis of purine nucleotides, regulating purB, purC, purEK, purF, purHD, purL, purMN and guaBA expression. PurR is allosterically activated to bind its cognate DNA by binding the purine corepressors, hypoxanthine or guanine, thereby effecting transcription repression. In Photobacterium profundum (strain SS9), this protein is HTH-type transcriptional repressor PurR.